The chain runs to 450 residues: MKTVTEFQNKNILVLGIAKSGYAAATLLQKLGANVIVNDGKPLAENVLAAELQAKGMDVVCGGHPLELLERNISLVVKNPGIPYSNPILVAAKEKQIPIVTEVELAYRISEAPFVGITGSNGKTTTTMLTFEMLKEGQKHPVIAGNIGTVACEVAQDAKENEVVVTELSSFQLMGVELFQPKIAAFLNLFEAHLDYHGTKKEYGLAKANIFKNQTENDYSVINADDADVMALSAYSKGQKVLFSTTKEIEDGACIKDNALYFKGEKVVEVGDIVLPGQHNLENILAAMSIAKLLGVSNEAITAVLKRFTGVKHRLEYVTTINNRKFYNDSKATNMLATEKALSAFTQPTVLLAGGLDRGNEFDDLIPYFKNVKAIVTFGQTAPKLVRAAEKAGLDTIESVDTLDEAVVKAYAHSTDGDVILLSPACASWDQFKTFEERGDIFIQAVHKLI.

Residue 119–125 (GSNGKTT) participates in ATP binding.

It belongs to the MurCDEF family.

It is found in the cytoplasm. The enzyme catalyses UDP-N-acetyl-alpha-D-muramoyl-L-alanine + D-glutamate + ATP = UDP-N-acetyl-alpha-D-muramoyl-L-alanyl-D-glutamate + ADP + phosphate + H(+). It participates in cell wall biogenesis; peptidoglycan biosynthesis. Its function is as follows. Cell wall formation. Catalyzes the addition of glutamate to the nucleotide precursor UDP-N-acetylmuramoyl-L-alanine (UMA). This is UDP-N-acetylmuramoylalanine--D-glutamate ligase from Bacillus cereus (strain Q1).